The sequence spans 121 residues: DNA-directed RNA polymerase subunit omega (121 aa).

The tract at residues 95-121 (DGDAANDLQGEEDDLGLGLDEAEDLGF) is disordered. Residues 103–121 (QGEEDDLGLGLDEAEDLGF) show a composition bias toward acidic residues.

It belongs to the RNA polymerase subunit omega family. In terms of assembly, the RNAP catalytic core consists of 2 alpha, 1 beta, 1 beta' and 1 omega subunit. When a sigma factor is associated with the core the holoenzyme is formed, which can initiate transcription.

The enzyme catalyses RNA(n) + a ribonucleoside 5'-triphosphate = RNA(n+1) + diphosphate. Its function is as follows. Promotes RNA polymerase assembly. Latches the N- and C-terminal regions of the beta' subunit thereby facilitating its interaction with the beta and alpha subunits. The chain is DNA-directed RNA polymerase subunit omega from Magnetococcus marinus (strain ATCC BAA-1437 / JCM 17883 / MC-1).